Consider the following 360-residue polypeptide: Photosystem II protein D1 3 (360 aa).

A run of 3 helical transmembrane segments spans residues 29-46 (YVGWFGVLMIPTLLAATI), 118-133 (HFLIGVFCYMGREWEL), and 142-156 (WICVAYSAPVAAATA). His118 lines the chlorophyll a pocket. Residue Tyr126 coordinates pheophytin a. 2 residues coordinate [CaMn4O5] cluster: Asp170 and Glu189. A helical transmembrane segment spans residues 197–218 (FHQLGVAGVFGGALFSAMHGSL). A chlorophyll a-binding site is contributed by His198. A quinone-binding positions include His215 and 264-265 (SF). Residue His215 coordinates Fe cation. Residue His272 coordinates Fe cation. The chain crosses the membrane as a helical span at residues 274–288 (FLAAWPVIGIWFTAL). Residues His332, Glu333, Asp342, and Ala344 each coordinate [CaMn4O5] cluster. A propeptide spanning residues 345-360 (SAESAPVAMIAPSING) is cleaved from the precursor.

Belongs to the reaction center PufL/M/PsbA/D family. PSII is composed of 1 copy each of membrane proteins PsbA, PsbB, PsbC, PsbD, PsbE, PsbF, PsbH, PsbI, PsbJ, PsbK, PsbL, PsbM, PsbT, PsbX, PsbY, PsbZ, Psb30/Ycf12, peripheral proteins PsbO, CyanoQ (PsbQ), PsbU, PsbV and a large number of cofactors. It forms dimeric complexes. Precursor protein interacts with Ycf48. Requires The D1/D2 heterodimer binds P680, chlorophylls that are the primary electron donor of PSII, and subsequent electron acceptors. It shares a non-heme iron and each subunit binds pheophytin, quinone, additional chlorophylls, carotenoids and lipids. D1 provides most of the ligands for the Mn4-Ca-O5 cluster of the oxygen-evolving complex (OEC). There is also a Cl(-1) ion associated with D1 and D2, which is required for oxygen evolution. The PSII complex binds additional chlorophylls, carotenoids and specific lipids. as cofactor. In terms of processing, C-terminally processed by CtpA; processing is essential to allow assembly of the oxygen-evolving complex and thus photosynthetic growth. Post-translationally, tyr-161 forms a radical intermediate that is referred to as redox-active TyrZ, YZ or Y-Z.

The protein localises to the cellular thylakoid membrane. The enzyme catalyses 2 a plastoquinone + 4 hnu + 2 H2O = 2 a plastoquinol + O2. In terms of biological role, photosystem II (PSII) is a light-driven water:plastoquinone oxidoreductase that uses light energy to abstract electrons from H(2)O, generating O(2) and a proton gradient subsequently used for ATP formation. It consists of a core antenna complex that captures photons, and an electron transfer chain that converts photonic excitation into a charge separation. The D1/D2 (PsbA/PsbD) reaction center heterodimer binds P680, the primary electron donor of PSII as well as several subsequent electron acceptors. The protein is Photosystem II protein D1 3 of Thermosynechococcus vestitus (strain NIES-2133 / IAM M-273 / BP-1).